The sequence spans 173 residues: Crossover junction endodeoxyribonuclease RuvC (173 aa).

Residues aspartate 8, glutamate 67, and aspartate 139 contribute to the active site. Mg(2+) is bound by residues aspartate 8, glutamate 67, and aspartate 139.

It belongs to the RuvC family. Homodimer which binds Holliday junction (HJ) DNA. The HJ becomes 2-fold symmetrical on binding to RuvC with unstacked arms; it has a different conformation from HJ DNA in complex with RuvA. In the full resolvosome a probable DNA-RuvA(4)-RuvB(12)-RuvC(2) complex forms which resolves the HJ. Mg(2+) serves as cofactor.

It is found in the cytoplasm. It catalyses the reaction Endonucleolytic cleavage at a junction such as a reciprocal single-stranded crossover between two homologous DNA duplexes (Holliday junction).. Its function is as follows. The RuvA-RuvB-RuvC complex processes Holliday junction (HJ) DNA during genetic recombination and DNA repair. Endonuclease that resolves HJ intermediates. Cleaves cruciform DNA by making single-stranded nicks across the HJ at symmetrical positions within the homologous arms, yielding a 5'-phosphate and a 3'-hydroxyl group; requires a central core of homology in the junction. The consensus cleavage sequence is 5'-(A/T)TT(C/G)-3'. Cleavage occurs on the 3'-side of the TT dinucleotide at the point of strand exchange. HJ branch migration catalyzed by RuvA-RuvB allows RuvC to scan DNA until it finds its consensus sequence, where it cleaves and resolves the cruciform DNA. In Yersinia pseudotuberculosis serotype O:1b (strain IP 31758), this protein is Crossover junction endodeoxyribonuclease RuvC.